A 451-amino-acid chain; its full sequence is AP-4 complex subunit mu (451 aa).

Positions 184–450 (REEIFVDIIE…VTQANSYVAR (267 aa)) constitute an MHD domain.

Belongs to the adaptor complexes medium subunit family. Adaptor protein complex 4 (AP-4) is a heterotetramer composed of two large adaptins (epsilon-type subunit and beta-type subunit), a medium adaptin (mu-type subunit) and a small adaptin (sigma-type subunit).

The protein resides in the golgi apparatus. It is found in the trans-Golgi network. Its subcellular location is the membrane. It localises to the coated pit. Its function is as follows. Subunit of novel type of clathrin- or non-clathrin-associated protein coat involved in targeting proteins from the trans-Golgi network (TGN) to the endosomal-lysosomal system. The chain is AP-4 complex subunit mu (AP4M) from Arabidopsis thaliana (Mouse-ear cress).